The following is a 308-amino-acid chain: ADP-L-glycero-D-manno-heptose-6-epimerase (308 aa).

Residues 10 to 11 (MI), 31 to 32 (DN), Lys-38, Lys-53, 75 to 79 (EGACS), and Asn-92 each bind NADP(+). Catalysis depends on Tyr-139, which acts as the Proton acceptor. Lys-143 provides a ligand contact to NADP(+). Asn-168 is a substrate binding site. Residues Val-169 and Lys-177 each contribute to the NADP(+) site. The active-site Proton acceptor is Lys-177. Substrate-binding positions include Ser-179, His-186, 200 to 203 (FAGS), Arg-208, and Tyr-271.

Belongs to the NAD(P)-dependent epimerase/dehydratase family. HldD subfamily. As to quaternary structure, homopentamer. NADP(+) is required as a cofactor.

It catalyses the reaction ADP-D-glycero-beta-D-manno-heptose = ADP-L-glycero-beta-D-manno-heptose. It functions in the pathway nucleotide-sugar biosynthesis; ADP-L-glycero-beta-D-manno-heptose biosynthesis; ADP-L-glycero-beta-D-manno-heptose from D-glycero-beta-D-manno-heptose 7-phosphate: step 4/4. Its function is as follows. Catalyzes the interconversion between ADP-D-glycero-beta-D-manno-heptose and ADP-L-glycero-beta-D-manno-heptose via an epimerization at carbon 6 of the heptose. The sequence is that of ADP-L-glycero-D-manno-heptose-6-epimerase from Mannheimia succiniciproducens (strain KCTC 0769BP / MBEL55E).